Reading from the N-terminus, the 281-residue chain is 4-diphosphocytidyl-2-C-methyl-D-erythritol kinase (281 aa).

Residue lysine 15 is part of the active site. An ATP-binding site is contributed by 98–108 (PTGAGLGGGSS). Residue aspartate 140 is part of the active site.

This sequence belongs to the GHMP kinase family. IspE subfamily.

The catalysed reaction is 4-CDP-2-C-methyl-D-erythritol + ATP = 4-CDP-2-C-methyl-D-erythritol 2-phosphate + ADP + H(+). It functions in the pathway isoprenoid biosynthesis; isopentenyl diphosphate biosynthesis via DXP pathway; isopentenyl diphosphate from 1-deoxy-D-xylulose 5-phosphate: step 3/6. Functionally, catalyzes the phosphorylation of the position 2 hydroxy group of 4-diphosphocytidyl-2C-methyl-D-erythritol. The polypeptide is 4-diphosphocytidyl-2-C-methyl-D-erythritol kinase (Neisseria gonorrhoeae (strain ATCC 700825 / FA 1090)).